The primary structure comprises 190 residues: Elongation factor P (190 aa).

The protein belongs to the elongation factor P family.

The protein localises to the cytoplasm. Its pathway is protein biosynthesis; polypeptide chain elongation. In terms of biological role, involved in peptide bond synthesis. Stimulates efficient translation and peptide-bond synthesis on native or reconstituted 70S ribosomes in vitro. Probably functions indirectly by altering the affinity of the ribosome for aminoacyl-tRNA, thus increasing their reactivity as acceptors for peptidyl transferase. This chain is Elongation factor P, found in Hyphomonas neptunium (strain ATCC 15444).